The sequence spans 610 residues: Membrane protein insertase YidC (610 aa).

Residues 7–27 traverse the membrane as a helical segment; it reads FFITIALSILILALWQVFYLG. The tract at residues 36–82 is disordered; the sequence is QARIEEQQRQAQQAAQNRQASSSTGDTPQMPANPDSIPGQGDTKAAG. The span at 44–55 shows a compositional bias: low complexity; the sequence is RQAQQAAQNRQA. Helical transmembrane passes span 358 to 378, 387 to 407, 458 to 478, 510 to 530, and 546 to 566; these read FDLLIDWGWFYFITKPMFYLI, NFGVAILVVTVLLKALFFPLA, WPVLVQIPVFFALYKVLYVTI, TVPHFLMIGVWPIIMGIIMFL, and IFTWMPIIFTFMLASFPAGLV.

The protein belongs to the OXA1/ALB3/YidC family. Type 1 subfamily. In terms of assembly, interacts with the Sec translocase complex via SecD. Specifically interacts with transmembrane segments of nascent integral membrane proteins during membrane integration.

It is found in the cell inner membrane. Functionally, required for the insertion and/or proper folding and/or complex formation of integral membrane proteins into the membrane. Involved in integration of membrane proteins that insert both dependently and independently of the Sec translocase complex, as well as at least some lipoproteins. Aids folding of multispanning membrane proteins. The sequence is that of Membrane protein insertase YidC from Brucella melitensis biotype 1 (strain ATCC 23456 / CCUG 17765 / NCTC 10094 / 16M).